Consider the following 88-residue polypeptide: Antitoxin HipB (88 aa).

Residues methionine 17–cysteine 71 enclose the HTH cro/C1-type domain. The H-T-H motif DNA-binding region spans arginine 21–asparagine 47.

In terms of assembly, homodimer. Binds operator DNA sites in the absence of HipA, inducing a 70 degree bend in consecutive operators and deforming DNA between the operators so that HipB dimers bind on opposite faces of the DNA. Forms a HipA(2)HipB(2) heterotetramer which can interact with a single operator site on DNA, inducing a 70 degree bend. When 2 operators are present each HipB dimer contacts 1 HipA molecule, which are brought together by the DNA bend and dimerize, blocking the HipA active site and inactivating its toxic activity. HipA-HipB-induced bending also distorts the -35 and -10 boxes of the promoter and probably prevents sigma-factor binding, and additionally bound HipB and HipA block RNA polymerase access to the -35 box, thus repressing the operon. This complex also blocks the toxic activity of HipA. Mutations present in allele hipA7 (G22S and D291A) decrease the affinity of HipA for HipB. Degraded by Lon protease in vivo; half-life is 17 minutes in wild-type cells and over 200 minutes in a lon deletion strain. In vitro degradation by Lon is Mg(2+)-ATP-dependent.

Its activity is regulated as follows. Degraded by Lon protease; degradation is inhibited in a HipA-HipB complex and when bound to the operator consensus sequence dsDNA. Functionally, antitoxin component of a type II toxin-antitoxin (TA) system. Neutralizes the toxic effect of cognate toxin HipA. Also neutralizes the toxic effect of non-cognate toxin YjjJ. Binds to operator sites with the consensus sequence 5-'TATCCN(8)GGATA-3' to repress the hipBA operon promoter; binding of HipB(2) to DNA induces a 70 degree bend. This forces HipA dimerization, which blocks HipA's active site and thus its toxic action. May play a role in biofilm formation. In Escherichia coli (strain K12), this protein is Antitoxin HipB (hipB).